We begin with the raw amino-acid sequence, 552 residues long: Non-structural protein NS1 (552 aa).

The chain is Non-structural protein NS1 (Segment-5) from Bluetongue virus 1 (isolate South Africa) (BTV 1).